The following is a 124-amino-acid chain: Orexigenic neuropeptide QRFP (124 aa).

The signal sequence occupies residues 1-17 (MRGFRPLLSLLLPLSAC). Residues 18 to 79 (FPLLDRRGPT…REHTGFRLGR (62 aa)) constitute a propeptide that is removed on maturation. The tract at residues 63-101 (REQQASHREHTGFRLGRQDGSSEAAGFLPADSEKASGPL) is disordered. A Phenylalanine amide modification is found at F122.

This sequence belongs to the RFamide neuropeptide family. Ligand for the G-protein coupled receptor QRFPR/GPR103. As to expression, expressed in the brain with highest levels in the periventricular hypothalamic nucleus and lateral hypothalamic areas. Expressed at moderate levels in the adrenal gland, eye, heart, intestine, liver, lung, kidney, mesenteric lymph node, ovary, placenta, Peyer patches, skin, spleen, stomach, testis, thymus and uterus.

It localises to the secreted. Its function is as follows. Stimulates feeding and grooming behavior, metabolic rate and locomotor activity and increases blood pressure. May have orexigenic activity. May promote aldosterone secretion by the adrenal gland. The polypeptide is Orexigenic neuropeptide QRFP (Mus musculus (Mouse)).